The chain runs to 345 residues: uncharacterized protein (345 aa).

The region spanning 1 to 198 is the CNNM transmembrane domain; sequence MDVLSAVLLA…LSEGLLDHEE (198 aa). The next 2 helical transmembrane spans lie at 3–23 and 95–115; these read VLSA…FVGA and VPPA…HVLL. CBS domains lie at 217-280 and 285-342; these read AVPL…PQTV and VVRP…MRDG. A helical membrane pass occupies residues 312–332; it reads LALVTADNGSVVGMVALEDVV.

Belongs to the TerC family.

Its subcellular location is the cell membrane. This is an uncharacterized protein from Mycobacterium tuberculosis (strain ATCC 25618 / H37Rv).